A 730-amino-acid chain; its full sequence is MEISPGSSTHERDRKGSYGHRERTRSHSGSPSRFYSKDKRGSSRQGVRPRDRDSKDSISPQYKQRNWSRGGGGGGRDRGRNDFSYRKKGKDYNKRRDKRSRSRSRHRSPKRSGSSKKSKRRNSSGSSSSDLMDTSLMSELKKHGDYGSSSKSKKKSRKRRKHSSSSSSSSGEAMDLPVSSNGMNVTAIPPPPSFNINPFQPMFSQPPPPPLPPNSQFMTPPPRPPPAPFSIPPPSVDIHFAATASFSLSSIPPPPPQTDGGASSSKRQDPLPMPPDSKRIATRPVITTRRGHATNRPSDSDSWYKTNLTHYTMLDQIGEGTYGQVYKAVNNLTGEQVALKRVRLENEKEGFPITAIREIKILRQLHHKNIVRLMDIVIDDISMDELKRTRANFYLVFEYVDHDLIGLLESKELVDFNKDQICSLFKQLLEGLAYIHNTGFLHRDIKCSNILVNNKGELKIADLGLARLWEKESRLYTNRVITLWYRPPELLLGDERYGPAIDVWSTGCMLGELFTRKPLFNGNNEFGQLELISKVCGSPNVDNWPELTELVGWNTFRMKRTYQRRIREEFEHIMPREAVDLLDKMLTLNPEKRISAKEALNHPWIRSLEHTTVQPLKLPQHQDCHEMWSKKQKKSARLGRQAEGSSGSGHSIRATSHPRAPTQPSTTTTKSNGSSNHHHHHHHSHHHASSLPPSGGHAPPPPPPPTQASSTSHNNHQPVPQSQYQSVFFK.

2 disordered regions span residues 1 to 230 (MEIS…APFS) and 246 to 283 (FSLS…IATR). Residues 9–21 (THERDRKGSYGHR) show a composition bias toward basic and acidic residues. Residues 57–67 (SISPQYKQRNW) show a composition bias toward polar residues. Residues 75-94 (GRDRGRNDFSYRKKGKDYNK) are compositionally biased toward basic and acidic residues. Composition is skewed to basic residues over residues 95-122 (RRDK…KRRN) and 151-163 (KSKK…RKHS). Residues 194–203 (FNINPFQPMF) are compositionally biased toward low complexity. Residues 204–230 (SQPPPPPLPPNSQFMTPPPRPPPAPFS) show a composition bias toward pro residues. The region spanning 313-605 (MLDQIGEGTY…AKEALNHPWI (293 aa)) is the Protein kinase domain. ATP is bound by residues 317–325 (IGEGTYGQV), K340, and 398–403 (EYVDHD). D444 acts as the Proton acceptor in catalysis. Residues 623 to 730 (DCHEMWSKKQ…QSQYQSVFFK (108 aa)) form a disordered region. ATP is bound at residue H625. Basic residues predominate over residues 676–688 (NHHHHHHHSHHHA). A compositionally biased stretch (polar residues) spans 714–730 (NNHQPVPQSQYQSVFFK).

It belongs to the protein kinase superfamily. CMGC Ser/Thr protein kinase family. CDC2/CDKX subfamily.

The protein localises to the nucleus. It carries out the reaction [DNA-directed RNA polymerase] + ATP = phospho-[DNA-directed RNA polymerase] + ADP + H(+). The catalysed reaction is L-seryl-[protein] + ATP = O-phospho-L-seryl-[protein] + ADP + H(+). The enzyme catalyses L-threonyl-[protein] + ATP = O-phospho-L-threonyl-[protein] + ADP + H(+). In terms of biological role, cyclin-dependent kinase which displays CTD kinase activity: hyperphosphorylates 'Ser-2' in the C-terminal heptapeptide repeat domain (CTD) of the largest RNA polymerase II subunit, thereby acting as a key regulator of transcription elongation. Required for normal reproduction. This is Cyclin-dependent kinase 12 from Caenorhabditis elegans.